The sequence spans 156 residues: Small ribosomal subunit protein uS7 (156 aa).

Belongs to the universal ribosomal protein uS7 family. As to quaternary structure, part of the 30S ribosomal subunit. Contacts proteins S9 and S11.

One of the primary rRNA binding proteins, it binds directly to 16S rRNA where it nucleates assembly of the head domain of the 30S subunit. Is located at the subunit interface close to the decoding center, probably blocks exit of the E-site tRNA. This Limosilactobacillus reuteri (strain DSM 20016) (Lactobacillus reuteri) protein is Small ribosomal subunit protein uS7.